The following is a 399-amino-acid chain: Methylthioribose kinase (399 aa).

ATP-binding positions include Asn-40, Lys-57, and 111 to 113 (EDL). Asp-229 provides a ligand contact to substrate. ATP is bound at residue 246–248 (DAE). Arg-344 lines the substrate pocket.

Belongs to the methylthioribose kinase family. As to quaternary structure, homodimer.

The catalysed reaction is 5-(methylsulfanyl)-D-ribose + ATP = 5-(methylsulfanyl)-alpha-D-ribose 1-phosphate + ADP + H(+). It functions in the pathway amino-acid biosynthesis; L-methionine biosynthesis via salvage pathway; S-methyl-5-thio-alpha-D-ribose 1-phosphate from S-methyl-5'-thioadenosine (hydrolase route): step 2/2. Functionally, catalyzes the phosphorylation of methylthioribose into methylthioribose-1-phosphate. In Erwinia tasmaniensis (strain DSM 17950 / CFBP 7177 / CIP 109463 / NCPPB 4357 / Et1/99), this protein is Methylthioribose kinase.